The chain runs to 172 residues: 6,7-dimethyl-8-ribityllumazine synthase (172 aa).

5-amino-6-(D-ribitylamino)uracil contacts are provided by residues Phe24, 58-60 (ALE), and 82-84 (AVI). (2S)-2-hydroxy-3-oxobutyl phosphate is bound at residue 87–88 (ET). His90 serves as the catalytic Proton donor. Asn115 contributes to the 5-amino-6-(D-ribitylamino)uracil binding site. Arg129 contributes to the (2S)-2-hydroxy-3-oxobutyl phosphate binding site. The disordered stretch occupies residues 150 to 172 (ALDQLGDDDEDEEEDEDDEEERA). The span at 154–172 (LGDDDEDEEEDEDDEEERA) shows a compositional bias: acidic residues.

It belongs to the DMRL synthase family.

The enzyme catalyses (2S)-2-hydroxy-3-oxobutyl phosphate + 5-amino-6-(D-ribitylamino)uracil = 6,7-dimethyl-8-(1-D-ribityl)lumazine + phosphate + 2 H2O + H(+). It functions in the pathway cofactor biosynthesis; riboflavin biosynthesis; riboflavin from 2-hydroxy-3-oxobutyl phosphate and 5-amino-6-(D-ribitylamino)uracil: step 1/2. Catalyzes the formation of 6,7-dimethyl-8-ribityllumazine by condensation of 5-amino-6-(D-ribitylamino)uracil with 3,4-dihydroxy-2-butanone 4-phosphate. This is the penultimate step in the biosynthesis of riboflavin. The polypeptide is 6,7-dimethyl-8-ribityllumazine synthase (Burkholderia multivorans (strain ATCC 17616 / 249)).